A 337-amino-acid chain; its full sequence is Holliday junction branch migration complex subunit RuvB (337 aa).

Residues 1–182 (MSEEKSVLRD…FGAVFRLSYY (182 aa)) are large ATPase domain (RuvB-L). Residues L21, R22, G63, K66, T67, T68, 129–131 (EDY), R172, Y182, and R219 contribute to the ATP site. T67 is a binding site for Mg(2+). The tract at residues 183 to 253 (KLEEIKQIVR…ITQLALTKLG (71 aa)) is small ATPAse domain (RuvB-S). The segment at 256 to 337 (HKGLDASDYL…VKYYKGLLDN (82 aa)) is head domain (RuvB-H). Positions 311 and 316 each coordinate DNA.

This sequence belongs to the RuvB family. In terms of assembly, homohexamer. Forms an RuvA(8)-RuvB(12)-Holliday junction (HJ) complex. HJ DNA is sandwiched between 2 RuvA tetramers; dsDNA enters through RuvA and exits via RuvB. An RuvB hexamer assembles on each DNA strand where it exits the tetramer. Each RuvB hexamer is contacted by two RuvA subunits (via domain III) on 2 adjacent RuvB subunits; this complex drives branch migration. In the full resolvosome a probable DNA-RuvA(4)-RuvB(12)-RuvC(2) complex forms which resolves the HJ.

The protein localises to the cytoplasm. It catalyses the reaction ATP + H2O = ADP + phosphate + H(+). In terms of biological role, the RuvA-RuvB-RuvC complex processes Holliday junction (HJ) DNA during genetic recombination and DNA repair, while the RuvA-RuvB complex plays an important role in the rescue of blocked DNA replication forks via replication fork reversal (RFR). RuvA specifically binds to HJ cruciform DNA, conferring on it an open structure. The RuvB hexamer acts as an ATP-dependent pump, pulling dsDNA into and through the RuvAB complex. RuvB forms 2 homohexamers on either side of HJ DNA bound by 1 or 2 RuvA tetramers; 4 subunits per hexamer contact DNA at a time. Coordinated motions by a converter formed by DNA-disengaged RuvB subunits stimulates ATP hydrolysis and nucleotide exchange. Immobilization of the converter enables RuvB to convert the ATP-contained energy into a lever motion, pulling 2 nucleotides of DNA out of the RuvA tetramer per ATP hydrolyzed, thus driving DNA branch migration. The RuvB motors rotate together with the DNA substrate, which together with the progressing nucleotide cycle form the mechanistic basis for DNA recombination by continuous HJ branch migration. Branch migration allows RuvC to scan DNA until it finds its consensus sequence, where it cleaves and resolves cruciform DNA. This chain is Holliday junction branch migration complex subunit RuvB, found in Acholeplasma laidlawii (strain PG-8A).